The primary structure comprises 380 residues: Cytochrome b (380 aa).

The next 4 membrane-spanning stretches (helical) occupy residues 34 to 54, 78 to 99, 114 to 134, and 179 to 199; these read FGSL…LLAA, WLIR…YLHI, WNIG…GYVL, and FFAL…VHLT. His84 and His98 together coordinate heme b. Heme b-binding residues include His183 and His197. A ubiquinone is bound at residue His202. A run of 4 helical transmembrane segments spans residues 227–247, 289–309, 321–341, and 348–368; these read IKDI…ALFS, LGGV…PLLH, LSQI…WVGS, and FIII…VLFP.

The protein belongs to the cytochrome b family. As to quaternary structure, the cytochrome bc1 complex contains 11 subunits: 3 respiratory subunits (MT-CYB, CYC1 and UQCRFS1), 2 core proteins (UQCRC1 and UQCRC2) and 6 low-molecular weight proteins (UQCRH/QCR6, UQCRB/QCR7, UQCRQ/QCR8, UQCR10/QCR9, UQCR11/QCR10 and a cleavage product of UQCRFS1). This cytochrome bc1 complex then forms a dimer. The cofactor is heme b.

It is found in the mitochondrion inner membrane. Component of the ubiquinol-cytochrome c reductase complex (complex III or cytochrome b-c1 complex) that is part of the mitochondrial respiratory chain. The b-c1 complex mediates electron transfer from ubiquinol to cytochrome c. Contributes to the generation of a proton gradient across the mitochondrial membrane that is then used for ATP synthesis. This is Cytochrome b (MT-CYB) from Paradisaea rubra (Red bird of paradise).